The primary structure comprises 388 residues: AT-rich binding protein (388 aa).

The C2H2-type 1 zinc-finger motif lies at 29 to 52; it reads IVCHTCQEELQTQDQFWKHIQDEH. Low complexity-rich tracts occupy residues 138–165 and 249–265; these read QQHQ…LQQQ and VSVS…STTP. Disordered regions lie at residues 138 to 168 and 240 to 265; these read QQHQ…QRDV and PPPP…STTP. 2 C2H2-type zinc fingers span residues 321-345 and 351-374; these read YVCD…RVVH and FNCE…KKKH.

It is found in the nucleus. Its function is as follows. May be a transcription factor for genes having (A+T) stretches in their promoter and/or enhancer regions. Binds to AT rich DNA. The protein is AT-rich binding protein of Drosophila melanogaster (Fruit fly).